Consider the following 195-residue polypeptide: Pyridoxal 5'-phosphate synthase subunit PdxT (195 aa).

L-glutamine is bound at residue 55–57; sequence GES. The Nucleophile role is filled by cysteine 84. Residues arginine 111 and 139 to 140 each bind L-glutamine; that span reads IR. Residues histidine 175 and glutamate 177 each act as charge relay system in the active site.

This sequence belongs to the glutaminase PdxT/SNO family. As to quaternary structure, in the presence of PdxS, forms a dodecamer of heterodimers. Only shows activity in the heterodimer.

The enzyme catalyses aldehydo-D-ribose 5-phosphate + D-glyceraldehyde 3-phosphate + L-glutamine = pyridoxal 5'-phosphate + L-glutamate + phosphate + 3 H2O + H(+). It carries out the reaction L-glutamine + H2O = L-glutamate + NH4(+). The protein operates within cofactor biosynthesis; pyridoxal 5'-phosphate biosynthesis. Catalyzes the hydrolysis of glutamine to glutamate and ammonia as part of the biosynthesis of pyridoxal 5'-phosphate. The resulting ammonia molecule is channeled to the active site of PdxS. This is Pyridoxal 5'-phosphate synthase subunit PdxT from Methanosphaerula palustris (strain ATCC BAA-1556 / DSM 19958 / E1-9c).